The primary structure comprises 222 residues: CEACAM1-like protein UL7 (222 aa).

N-linked (GlcNAc...) asparagine; by host glycans are attached at residues Asn-50, Asn-56, Asn-60, Asn-71, Asn-105, Asn-109, Asn-125, Asn-132, Asn-147, Asn-164, Asn-168, and Asn-189. Residues 193–213 form a helical membrane-spanning segment; the sequence is LALVGVIVFIALIVVCIMGWW.

It belongs to the RL11 family. In terms of assembly, interacts with host FLT3. Post-translationally, highly glycosylated.

The protein resides in the secreted. The protein localises to the host cell membrane. Plays a role in modulating the host immune response and affecting host cytokine production. Structurally and functionally homolog of host CEACAM1, induces endothelial cell angiogenesis. Ligands for host FLT3 receptor, activates the PI3K/AKT and MAPK/ERK pathways. In turn, triggers hematopoietic progenitor cell and monocyte differentiation leading to virus reactivation. The chain is CEACAM1-like protein UL7 (UL7) from Human cytomegalovirus (strain AD169) (HHV-5).